A 297-amino-acid polypeptide reads, in one-letter code: Esterase LipU (297 aa).

Catalysis depends on residues serine 140, glutamate 239, and histidine 269.

It belongs to the 'GDXG' lipolytic enzyme family.

The protein localises to the secreted. It carries out the reaction a fatty acid ester + H2O = an aliphatic alcohol + a fatty acid + H(+). The catalysed reaction is a butanoate ester + H2O = an aliphatic alcohol + butanoate + H(+). It catalyses the reaction an acetyl ester + H2O = an aliphatic alcohol + acetate + H(+). The enzyme catalyses decanoate ester + H2O = decanoate + an aliphatic alcohol + H(+). It carries out the reaction an octanoate ester + H2O = an aliphatic alcohol + octanoate + H(+). The catalysed reaction is a dodecanoate ester + H2O = an aliphatic alcohol + dodecanoate + H(+). It catalyses the reaction hexadecanoate ester + H2O = an aliphatic alcohol + hexadecanoate + H(+). Inhibited by the ionic detergent SDS and by the serine protease inhibitor PMSF. Inhibited by the FDA approved drugs Diosmin, Acarbose and Ouabain. These drugs remain bound in the active site pocket and could be probable drug candidates to combat TB disease. Functionally, esterase that shows preference for short chain fatty acids. Contributes to the growth of M.tuberculosis during the nutritive stress. Elicits strong humoral response in both extrapulmonary and relapsed cases of tuberculosis patients. In Mycobacterium tuberculosis (strain ATCC 25618 / H37Rv), this protein is Esterase LipU.